Consider the following 193-residue polypeptide: Probable molybdenum cofactor guanylyltransferase (193 aa).

GTP is bound by residues 9–11 (TAG), Lys21, Asp64, and Asp93. A Mg(2+)-binding site is contributed by Asp93.

It belongs to the MobA family. Mg(2+) is required as a cofactor.

Its subcellular location is the cytoplasm. The enzyme catalyses Mo-molybdopterin + GTP + H(+) = Mo-molybdopterin guanine dinucleotide + diphosphate. In terms of biological role, transfers a GMP moiety from GTP to Mo-molybdopterin (Mo-MPT) cofactor (Moco or molybdenum cofactor) to form Mo-molybdopterin guanine dinucleotide (Mo-MGD) cofactor. This chain is Probable molybdenum cofactor guanylyltransferase, found in Deinococcus radiodurans (strain ATCC 13939 / DSM 20539 / JCM 16871 / CCUG 27074 / LMG 4051 / NBRC 15346 / NCIMB 9279 / VKM B-1422 / R1).